A 205-amino-acid polypeptide reads, in one-letter code: Methylthioribulose-1-phosphate dehydratase (205 aa).

Residues histidine 98 and histidine 100 each contribute to the Zn(2+) site.

The protein belongs to the aldolase class II family. MtnB subfamily. Zn(2+) serves as cofactor.

The catalysed reaction is 5-(methylsulfanyl)-D-ribulose 1-phosphate = 5-methylsulfanyl-2,3-dioxopentyl phosphate + H2O. It participates in amino-acid biosynthesis; L-methionine biosynthesis via salvage pathway; L-methionine from S-methyl-5-thio-alpha-D-ribose 1-phosphate: step 2/6. Its function is as follows. Catalyzes the dehydration of methylthioribulose-1-phosphate (MTRu-1-P) into 2,3-diketo-5-methylthiopentyl-1-phosphate (DK-MTP-1-P). This chain is Methylthioribulose-1-phosphate dehydratase, found in Gluconacetobacter diazotrophicus (strain ATCC 49037 / DSM 5601 / CCUG 37298 / CIP 103539 / LMG 7603 / PAl5).